We begin with the raw amino-acid sequence, 94 residues long: Co-chaperonin GroES (94 aa).

The segment at 17 to 53 (DSNPNSPIQLPDSAKKKPTKGKVVSVGPGASNSDGKV) is disordered.

It belongs to the GroES chaperonin family. Heptamer of 7 subunits arranged in a ring. Interacts with the chaperonin GroEL.

It localises to the cytoplasm. In terms of biological role, together with the chaperonin GroEL, plays an essential role in assisting protein folding. The GroEL-GroES system forms a nano-cage that allows encapsulation of the non-native substrate proteins and provides a physical environment optimized to promote and accelerate protein folding. GroES binds to the apical surface of the GroEL ring, thereby capping the opening of the GroEL channel. The protein is Co-chaperonin GroES of Anaplasma phagocytophilum (strain HZ).